Consider the following 386-residue polypeptide: Glucose-1-phosphate adenylyltransferase (386 aa).

Alpha-D-glucose 1-phosphate is bound by residues Tyr100, Gly165, 180 to 181, and Ser191; that span reads EK.

Belongs to the bacterial/plant glucose-1-phosphate adenylyltransferase family. As to quaternary structure, homotetramer.

The enzyme catalyses alpha-D-glucose 1-phosphate + ATP + H(+) = ADP-alpha-D-glucose + diphosphate. It functions in the pathway glycan biosynthesis; glycogen biosynthesis. Functionally, involved in the biosynthesis of ADP-glucose, a building block required for the elongation reactions to produce glycogen. Catalyzes the reaction between ATP and alpha-D-glucose 1-phosphate (G1P) to produce pyrophosphate and ADP-Glc. In Clostridium botulinum (strain Alaska E43 / Type E3), this protein is Glucose-1-phosphate adenylyltransferase.